The following is a 117-amino-acid chain: Large ribosomal subunit protein bL20 (117 aa).

The protein belongs to the bacterial ribosomal protein bL20 family.

Its function is as follows. Binds directly to 23S ribosomal RNA and is necessary for the in vitro assembly process of the 50S ribosomal subunit. It is not involved in the protein synthesizing functions of that subunit. This chain is Large ribosomal subunit protein bL20, found in Glaesserella parasuis serovar 5 (strain SH0165) (Haemophilus parasuis).